Reading from the N-terminus, the 291-residue chain is Quinol oxidase subunit 2 (291 aa).

The first 28 residues, 1-28 (MQLKKAFWKLASLLPXSLLLFLGGCDKK), serve as a signal peptide directing secretion. A run of 2 helical transmembrane segments spans residues 49–69 (SFLLMSLIIAIVFILFTVILI) and 91–111 (LEIIWTLVPVIIVIALSIPTV).

This sequence belongs to the cytochrome c oxidase subunit 2 family.

It localises to the cell membrane. The enzyme catalyses 2 a quinol + O2 = 2 a quinone + 2 H2O. Catalyzes quinol oxidation with the concomitant reduction of oxygen to water. Subunit II transfers the electrons from a quinol to the binuclear center of the catalytic subunit I. This chain is Quinol oxidase subunit 2, found in Bacillus cereus (strain ATCC 10987 / NRS 248).